Consider the following 168-residue polypeptide: Protein-export protein SecB (168 aa).

This sequence belongs to the SecB family. In terms of assembly, homotetramer, a dimer of dimers. One homotetramer interacts with 1 SecA dimer.

It localises to the cytoplasm. Its function is as follows. One of the proteins required for the normal export of preproteins out of the cell cytoplasm. It is a molecular chaperone that binds to a subset of precursor proteins, maintaining them in a translocation-competent state. It also specifically binds to its receptor SecA. The sequence is that of Protein-export protein SecB from Saccharophagus degradans (strain 2-40 / ATCC 43961 / DSM 17024).